Here is an 863-residue protein sequence, read N- to C-terminus: Paramyosin (863 aa).

Positions 1–18 (MSESHVKISRTIIRGTSP) are nonhelical region. Residues 19-836 (STVRLESRVR…ERTITIKRTI (818 aa)) adopt a coiled-coil conformation. Residues 837 to 863 (GGPGSRAVSVVREINSVSRGNRATSIM) form a nonhelical region region.

The protein belongs to the paramyosin family. Homodimer.

Its subcellular location is the cytoplasm. The protein localises to the myofibril. In terms of biological role, paramyosin is a major structural component of many thick filaments isolated from invertebrate muscles. The protein is Paramyosin (PMY) of Taenia saginata (Beef tapeworm).